The following is a 288-amino-acid chain: Thymidylate synthase (288 aa).

A dUMP-binding site is contributed by arginine 21. Asparagine 51 contacts (6R)-5,10-methylene-5,6,7,8-tetrahydrofolate. Position 150–151 (150–151 (RR)) interacts with dUMP. The active-site Nucleophile is cysteine 170. DUMP is bound by residues 190–193 (RSGD), asparagine 201, and 231–233 (HIY). Aspartate 193 serves as a coordination point for (6R)-5,10-methylene-5,6,7,8-tetrahydrofolate. A (6R)-5,10-methylene-5,6,7,8-tetrahydrofolate-binding site is contributed by alanine 287.

This sequence belongs to the thymidylate synthase family. Bacterial-type ThyA subfamily. Homodimer.

The protein localises to the cytoplasm. It carries out the reaction dUMP + (6R)-5,10-methylene-5,6,7,8-tetrahydrofolate = 7,8-dihydrofolate + dTMP. The protein operates within pyrimidine metabolism; dTTP biosynthesis. Functionally, catalyzes the reductive methylation of 2'-deoxyuridine-5'-monophosphate (dUMP) to 2'-deoxythymidine-5'-monophosphate (dTMP) while utilizing 5,10-methylenetetrahydrofolate (mTHF) as the methyl donor and reductant in the reaction, yielding dihydrofolate (DHF) as a by-product. This enzymatic reaction provides an intracellular de novo source of dTMP, an essential precursor for DNA biosynthesis. This Aster yellows witches'-broom phytoplasma (strain AYWB) protein is Thymidylate synthase.